The primary structure comprises 252 residues: 5'-nucleotidase SurE (252 aa).

The a divalent metal cation site is built by Asp-8, Asp-9, Ser-39, and Asn-91.

The protein belongs to the SurE nucleotidase family. The cofactor is a divalent metal cation.

The protein localises to the cytoplasm. The catalysed reaction is a ribonucleoside 5'-phosphate + H2O = a ribonucleoside + phosphate. Functionally, nucleotidase that shows phosphatase activity on nucleoside 5'-monophosphates. This is 5'-nucleotidase SurE from Bordetella bronchiseptica (strain ATCC BAA-588 / NCTC 13252 / RB50) (Alcaligenes bronchisepticus).